The following is a 110-amino-acid chain: Putative protein RIG (110 aa).

Expressed predominantly in brain and weakly in heart and lung. Expression is reduced or undetectable in cultured glioma cells, primary glioblastoma cells and malignant glioblastoma tumors.

In terms of biological role, may serve as a molecular marker for or play a role in the malignant progression of glioblastomas. This chain is Putative protein RIG (RIG), found in Homo sapiens (Human).